We begin with the raw amino-acid sequence, 92 residues long: uncharacterized protein (92 aa).

One can recognise an HTH arsR-type domain in the interval 1 to 92 (MNGNKDAIFK…LKNLLKGWIE (92 aa)). Positions 37–61 (IRLITKYDLSITRQAIAKHLSVLED) form a DNA-binding region, H-T-H motif.

This is an uncharacterized protein from Bacillus subtilis (strain 168).